We begin with the raw amino-acid sequence, 473 residues long: Photosystem II CP43 reaction center protein (473 aa).

Residues Met1–Glu14 constitute a propeptide that is removed on maturation. Residue Thr15 is modified to N-acetylthreonine. A Phosphothreonine modification is found at Thr15. 5 consecutive transmembrane segments (helical) span residues Leu69–Ala93, Leu134–Asn155, Lys178–Thr200, Lys255–Ser275, and Trp291–Ala312. Glu367 lines the [CaMn4O5] cluster pocket. A helical transmembrane segment spans residues Arg447 to Pro471.

This sequence belongs to the PsbB/PsbC family. PsbC subfamily. As to quaternary structure, PSII is composed of 1 copy each of membrane proteins PsbA, PsbB, PsbC, PsbD, PsbE, PsbF, PsbH, PsbI, PsbJ, PsbK, PsbL, PsbM, PsbT, PsbX, PsbY, PsbZ, Psb30/Ycf12, at least 3 peripheral proteins of the oxygen-evolving complex and a large number of cofactors. It forms dimeric complexes. It depends on Binds multiple chlorophylls and provides some of the ligands for the Ca-4Mn-5O cluster of the oxygen-evolving complex. It may also provide a ligand for a Cl- that is required for oxygen evolution. PSII binds additional chlorophylls, carotenoids and specific lipids. as a cofactor.

The protein localises to the plastid. The protein resides in the chloroplast thylakoid membrane. In terms of biological role, one of the components of the core complex of photosystem II (PSII). It binds chlorophyll and helps catalyze the primary light-induced photochemical processes of PSII. PSII is a light-driven water:plastoquinone oxidoreductase, using light energy to abstract electrons from H(2)O, generating O(2) and a proton gradient subsequently used for ATP formation. The polypeptide is Photosystem II CP43 reaction center protein (Cryptomeria japonica (Japanese cedar)).